A 130-amino-acid polypeptide reads, in one-letter code: UPF0102 protein BT_1882 (130 aa).

The protein belongs to the UPF0102 family.

The polypeptide is UPF0102 protein BT_1882 (Bartonella tribocorum (strain CIP 105476 / IBS 506)).